The primary structure comprises 138 residues: Cysteine desulfuration protein SufE (138 aa).

C51 (cysteine persulfide intermediate) is an active-site residue.

Belongs to the SufE family. As to quaternary structure, homodimer. Interacts with SufS.

It is found in the cytoplasm. The protein operates within cofactor biosynthesis; iron-sulfur cluster biosynthesis. In terms of biological role, participates in cysteine desulfuration mediated by SufS. Cysteine desulfuration mobilizes sulfur from L-cysteine to yield L-alanine and constitutes an essential step in sulfur metabolism for biosynthesis of a variety of sulfur-containing biomolecules. Functions as a sulfur acceptor for SufS, by mediating the direct transfer of the sulfur atom from the S-sulfanylcysteine of SufS, an intermediate product of cysteine desulfuration process. The sequence is that of Cysteine desulfuration protein SufE from Shigella boydii serotype 18 (strain CDC 3083-94 / BS512).